The chain runs to 446 residues: Maltoporin (446 aa).

A signal peptide spans 1 to 25; the sequence is MMITLRKLPLAVAVAAGVMSAQAMA.

Belongs to the porin LamB (TC 1.B.3) family. As to quaternary structure, homotrimer formed of three 18-stranded antiparallel beta-barrels, containing three independent channels.

It is found in the cell outer membrane. The enzyme catalyses beta-maltose(in) = beta-maltose(out). Functionally, involved in the transport of maltose and maltodextrins. The sequence is that of Maltoporin from Escherichia coli (strain SE11).